Consider the following 596-residue polypeptide: MKHIRNFSIIAHIDHGKSTLSDRLIHECGGLTDREMAAQVLDSMDIERERGITIKAQSVTLDYKANDGETYQLNFIDTPGHVDFSYEVSRSLAACEGALLVVDAGQGVEAQTLANCYTALEMDMDVVPVLNKIDLPQADPDRVAEEIEDIVGIEAADAVRCSAKTGVGIKDVLEVIVEQIPPPEGDEEGPLQALIIDSWFDSYLGVVSLVRIKNGVLKKGDKFKVMSTGQNHTADRVGIFTPKQTDTPELKTGEVGFVIAGIKEIHGAPVGDTLTHAKHGALEPLPGFKKVKPQVYAGLFPISTDDYESFRDALNKLSLNDASLFFEPETSSALGFGFRIGFLGLLHMEIIQERLEREYNLELITTAPTVVYEIVQTNGETIYVDNPSDLPAINNIEEMREPIVETNILVPKEYLGNVITLCVEKRGVQTNLVYHGNQVALTYELPMAEVVMDFFDRLKSTSRGYASLEYNFVRFEPADMVRLDILINGDRVDALAMIIHKGLIRSKGLALVNKMKELIPRQMFDIAVQAAVGSQIIARSSIKAMRKDVTAKCYGGDVSRKKKLLQKQKDGKKRMKQVGNVEVPQEAFLAVLKLND.

The tr-type G domain occupies 2–184 (KHIRNFSIIA…VIVEQIPPPE (183 aa)). Residues 14 to 19 (DHGKST) and 131 to 134 (NKID) contribute to the GTP site.

Belongs to the TRAFAC class translation factor GTPase superfamily. Classic translation factor GTPase family. LepA subfamily.

The protein localises to the cell inner membrane. The catalysed reaction is GTP + H2O = GDP + phosphate + H(+). Its function is as follows. Required for accurate and efficient protein synthesis under certain stress conditions. May act as a fidelity factor of the translation reaction, by catalyzing a one-codon backward translocation of tRNAs on improperly translocated ribosomes. Back-translocation proceeds from a post-translocation (POST) complex to a pre-translocation (PRE) complex, thus giving elongation factor G a second chance to translocate the tRNAs correctly. Binds to ribosomes in a GTP-dependent manner. This is Elongation factor 4 from Shewanella piezotolerans (strain WP3 / JCM 13877).